Here is a 559-residue protein sequence, read N- to C-terminus: Kelch repeat and BTB domain-containing protein 2 (559 aa).

A BTB domain is found at 26-95 (CDVIITIGDG…LYNRHISSMN (70 aa)). In terms of domain architecture, BACK spans 128–223 (CIYIYHRLYE…CIDIQNLDKK (96 aa)). Kelch repeat units lie at residues 305-352 (EIII…VIDD), 353-399 (MIYA…VFDQ), and 401-463 (IYII…SHKD).

Interacts (via BTB domain) with host CUL3.

Its subcellular location is the host cytoplasm. Functionally, probable substrate-specific adapter of CUL3-containing E3 ubiquitin-protein ligases which mediate the ubiquitination and subsequent proteasomal degradation of host target proteins. The protein is Kelch repeat and BTB domain-containing protein 2 (KBTB2) of Mus musculus (Mouse).